Here is a 531-residue protein sequence, read N- to C-terminus: Dihydropyrimidinase (531 aa).

His-103, His-105, and Lys-193 together coordinate Zn(2+). At Lys-193 the chain carries N6-carboxylysine. Substrate is bound at residue Tyr-198. 2 residues coordinate Zn(2+): His-226 and His-282. Ser-332 provides a ligand contact to substrate. Asp-359 contributes to the Zn(2+) binding site. Asn-380 contributes to the substrate binding site.

The protein belongs to the metallo-dependent hydrolases superfamily. Hydantoinase/dihydropyrimidinase family. Homotetramer. The cofactor is Zn(2+). In terms of processing, carboxylation allows a single lysine to coordinate two zinc ions.

It is found in the endoplasmic reticulum. It catalyses the reaction 5,6-dihydrouracil + H2O = 3-(carbamoylamino)propanoate + H(+). The protein operates within amino-acid biosynthesis; beta-alanine biosynthesis. Catalyzes the second step of the reductive pyrimidine degradation, the reversible hydrolytic ring opening of dihydropyrimidines. Can catalyze the ring opening of 5,6-dihydrouracil to N-carbamoyl-alanine and of 5,6-dihydrothymine to N-carbamoyl-amino isobutyrate. Involved in the recycling of nitrogen from nucleobases to general nitrogen metabolism. This chain is Dihydropyrimidinase, found in Arabidopsis thaliana (Mouse-ear cress).